Reading from the N-terminus, the 338-residue chain is UPF0104 membrane protein MTH_1261 (338 aa).

8 consecutive transmembrane segments (helical) span residues 6-26, 36-56, 124-144, 149-169, 231-251, 254-274, 275-295, and 310-330; these read AILIVIGVVALAAMILIIGPG, DPVYVLMAVVLEFIILALFTL, LDTFPFIFLAVLTIIGIVLYF, WILAALIASVVIIVVAFFLAL, ISFLIWILEIIRVYLIFTAFG, ISLLVIAEVFILATLIGMIPL, LPGGLGAVDGIMIVFYSYAGV, and ISFWMISAMGVAAIPYFGSSV.

This sequence belongs to the UPF0104 family.

Its subcellular location is the cell membrane. This is UPF0104 membrane protein MTH_1261 from Methanothermobacter thermautotrophicus (strain ATCC 29096 / DSM 1053 / JCM 10044 / NBRC 100330 / Delta H) (Methanobacterium thermoautotrophicum).